Here is a 244-residue protein sequence, read N- to C-terminus: tRNA pseudouridine synthase B (244 aa).

Asp-46 functions as the Nucleophile in the catalytic mechanism.

It belongs to the pseudouridine synthase TruB family. Type 1 subfamily.

It carries out the reaction uridine(55) in tRNA = pseudouridine(55) in tRNA. In terms of biological role, responsible for synthesis of pseudouridine from uracil-55 in the psi GC loop of transfer RNAs. This Bordetella parapertussis (strain 12822 / ATCC BAA-587 / NCTC 13253) protein is tRNA pseudouridine synthase B.